The following is a 46-amino-acid chain: Hellethionin-D (46 aa).

4 disulfide bridges follow: Cys-3-Cys-40, Cys-4-Cys-32, Cys-12-Cys-30, and Cys-16-Cys-26.

Belongs to the plant thionin (TC 1.C.44) family. 4 C-C subfamily.

The protein resides in the secreted. Functionally, thionins are small plant proteins which are toxic to animal cells. They seem to exert their toxic effect at the level of the cell membrane. Their precise function is not known. This Helleborus purpurascens (Purple hellebore) protein is Hellethionin-D.